The following is a 185-amino-acid chain: Uroplakin-2 (185 aa).

The signal sequence occupies residues 1-26 (MASPWPVWTLSWILILLAVLVPGAAA). The propeptide occupies 27–85 (DFNISSLSGLLSPVMTESLLVALPPCHLTGGNATLTVRRANDSKVVRSSFVVPPCRGRR). N-linked (GlcNAc...) asparagine glycosylation is found at N29, N58, and N67. The Lumenal portion of the chain corresponds to 86–156 (ELVSVVDSGS…IGLAMARTGG (71 aa)). Residues 157 to 177 (MVVITVLLSVAMFLLVLGLII) traverse the membrane as a helical segment. At 178 to 185 (ALALGARK) the chain is on the cytoplasmic side.

This sequence belongs to the uroplakin-2 family. As to quaternary structure, interacts with uroplakin-1a (UPK1A). Bladder epithelium.

Its subcellular location is the cell membrane. Its function is as follows. Component of the asymmetric unit membrane (AUM); a highly specialized biomembrane elaborated by terminally differentiated urothelial cells. May play an important role in regulating the assembly of the AUM. This Bos taurus (Bovine) protein is Uroplakin-2 (UPK2).